The chain runs to 303 residues: MKEEYKLSHLKELEAESIHIIREVAAEFENPVMLYSIGKDSSVMVRLAEKAFYPGKVPFPLMHIDSKWKFKEMIQFRDEYAKKYGWNLIVESNMEAFHAGVGPFTHGSKVHTDLMKTQALLRALDKYKFDAAFGGARRDEEKSRAKERIFSFRDKFHQWDPKNQRPELWDIYNARVHKGESIRVFPLSNWTELDIWQYIRLENIPIVPLYYAKERPVVQMDGNLIMADDERLPEKYRDQIEMKMVRFRTLGCWPLTGAVESEADTIEKIVEEMMTTTKSERTTRVIDFDQEGSMEQKKREGYF.

This sequence belongs to the PAPS reductase family. CysD subfamily. In terms of assembly, heterodimer composed of CysD, the smaller subunit, and CysN.

It catalyses the reaction sulfate + ATP + H(+) = adenosine 5'-phosphosulfate + diphosphate. It functions in the pathway sulfur metabolism; hydrogen sulfide biosynthesis; sulfite from sulfate: step 1/3. Its function is as follows. With CysN forms the ATP sulfurylase (ATPS) that catalyzes the adenylation of sulfate producing adenosine 5'-phosphosulfate (APS) and diphosphate, the first enzymatic step in sulfur assimilation pathway. APS synthesis involves the formation of a high-energy phosphoric-sulfuric acid anhydride bond driven by GTP hydrolysis by CysN coupled to ATP hydrolysis by CysD. This chain is Sulfate adenylyltransferase subunit 2, found in Bacteroides fragilis (strain YCH46).